Reading from the N-terminus, the 432-residue chain is D-amino acid dehydrogenase (432 aa).

FAD is bound at residue 3–17 (VVILGSGVVGVTSAW).

The protein belongs to the DadA oxidoreductase family. The cofactor is FAD.

The catalysed reaction is a D-alpha-amino acid + A + H2O = a 2-oxocarboxylate + AH2 + NH4(+). It participates in amino-acid degradation; D-alanine degradation; NH(3) and pyruvate from D-alanine: step 1/1. Oxidative deamination of D-amino acids. The sequence is that of D-amino acid dehydrogenase from Salmonella paratyphi C (strain RKS4594).